Reading from the N-terminus, the 610-residue chain is Elongation factor 4 (610 aa).

Residues 11 to 193 form the tr-type G domain; the sequence is ENIRNFSIIA…QIVEKVPAPS (183 aa). Residues 23–28 and 140–143 contribute to the GTP site; these read DHGKST and NKID.

Belongs to the TRAFAC class translation factor GTPase superfamily. Classic translation factor GTPase family. LepA subfamily.

Its subcellular location is the cell membrane. It catalyses the reaction GTP + H2O = GDP + phosphate + H(+). Functionally, required for accurate and efficient protein synthesis under certain stress conditions. May act as a fidelity factor of the translation reaction, by catalyzing a one-codon backward translocation of tRNAs on improperly translocated ribosomes. Back-translocation proceeds from a post-translocation (POST) complex to a pre-translocation (PRE) complex, thus giving elongation factor G a second chance to translocate the tRNAs correctly. Binds to ribosomes in a GTP-dependent manner. This Streptococcus equi subsp. zooepidemicus (strain MGCS10565) protein is Elongation factor 4.